A 255-amino-acid polypeptide reads, in one-letter code: Ribosomal RNA small subunit methyltransferase J (255 aa).

S-adenosyl-L-methionine is bound by residues 107 to 108 (RD), 123 to 124 (ER), and D178. Positions 228–247 (ARAEPLSGRKPSHQIPGKTT) are disordered.

It belongs to the methyltransferase superfamily. RsmJ family.

It localises to the cytoplasm. The catalysed reaction is guanosine(1516) in 16S rRNA + S-adenosyl-L-methionine = N(2)-methylguanosine(1516) in 16S rRNA + S-adenosyl-L-homocysteine + H(+). Functionally, specifically methylates the guanosine in position 1516 of 16S rRNA. The sequence is that of Ribosomal RNA small subunit methyltransferase J from Thioalkalivibrio sulfidiphilus (strain HL-EbGR7).